Here is a 611-residue protein sequence, read N- to C-terminus: Dihydroxy-acid dehydratase (611 aa).

Mg(2+) is bound at residue Asp81. [2Fe-2S] cluster is bound at residue Cys122. The Mg(2+) site is built by Asp123 and Lys124. Lys124 carries the post-translational modification N6-carboxylysine. Cys195 serves as a coordination point for [2Fe-2S] cluster. Glu491 lines the Mg(2+) pocket. The active-site Proton acceptor is Ser517.

The protein belongs to the IlvD/Edd family. In terms of assembly, homodimer. It depends on [2Fe-2S] cluster as a cofactor. Mg(2+) is required as a cofactor.

The enzyme catalyses (2R)-2,3-dihydroxy-3-methylbutanoate = 3-methyl-2-oxobutanoate + H2O. The catalysed reaction is (2R,3R)-2,3-dihydroxy-3-methylpentanoate = (S)-3-methyl-2-oxopentanoate + H2O. It participates in amino-acid biosynthesis; L-isoleucine biosynthesis; L-isoleucine from 2-oxobutanoate: step 3/4. It functions in the pathway amino-acid biosynthesis; L-valine biosynthesis; L-valine from pyruvate: step 3/4. In terms of biological role, functions in the biosynthesis of branched-chain amino acids. Catalyzes the dehydration of (2R,3R)-2,3-dihydroxy-3-methylpentanoate (2,3-dihydroxy-3-methylvalerate) into 2-oxo-3-methylpentanoate (2-oxo-3-methylvalerate) and of (2R)-2,3-dihydroxy-3-methylbutanoate (2,3-dihydroxyisovalerate) into 2-oxo-3-methylbutanoate (2-oxoisovalerate), the penultimate precursor to L-isoleucine and L-valine, respectively. The chain is Dihydroxy-acid dehydratase from Actinobacillus pleuropneumoniae serotype 3 (strain JL03).